The primary structure comprises 209 residues: MTPRIVVTGTDTDIGKTVFSAGLAGFLQASYWKPVQAGLDGGTDSSRVAALSGLPPQRILPERFRLNTPASPHLAAQIDGVRIELDALDVPQIAGSLVIEGAGGLMVPLNSDTLYIDVFARWNLPVVLCARTALGTINHALLSVEALRRRGIPICGIAFIGDDHRDSEDIICAIGQVRRLGRLPRLDPLDRHTLQAAFKTSFNREDFTS.

Asp-13–Val-18 is an ATP binding site. Thr-17 contacts Mg(2+). Lys-33 is a catalytic residue. Positions 47 and 100 each coordinate Mg(2+). Residues Glu-100–Gly-103 and Pro-184–Leu-186 contribute to the ATP site.

It belongs to the dethiobiotin synthetase family. In terms of assembly, homodimer. Requires Mg(2+) as cofactor.

The protein resides in the cytoplasm. The catalysed reaction is (7R,8S)-7,8-diammoniononanoate + CO2 + ATP = (4R,5S)-dethiobiotin + ADP + phosphate + 3 H(+). It functions in the pathway cofactor biosynthesis; biotin biosynthesis; biotin from 7,8-diaminononanoate: step 1/2. Catalyzes a mechanistically unusual reaction, the ATP-dependent insertion of CO2 between the N7 and N8 nitrogen atoms of 7,8-diaminopelargonic acid (DAPA, also called 7,8-diammoniononanoate) to form a ureido ring. This chain is ATP-dependent dethiobiotin synthetase BioD, found in Rhodopseudomonas palustris (strain BisB18).